Reading from the N-terminus, the 756-residue chain is Putative beta-xylosidase (756 aa).

A signal peptide spans 1–18 (MKKLLFTFLVSTGTIFFS). C19 carries the N-palmitoyl cysteine lipid modification. C19 carries S-diacylglycerol cysteine lipidation.

It belongs to the glycosyl hydrolase 3 family.

It is found in the cell outer membrane. Glycoside hydrolase probably involved in ulvan degradation. Ulvan is the main polysaccharide component of the Ulvales (green seaweed) cell wall. It is composed of disaccharide building blocks comprising 3-sulfated rhamnose (Rha3S) linked to D-glucuronic acid (GlcA), L-iduronic acid (IduA), or D-xylose (Xyl). The chain is Putative beta-xylosidase from Formosa agariphila (strain DSM 15362 / KCTC 12365 / LMG 23005 / KMM 3901 / M-2Alg 35-1).